The chain runs to 503 residues: Cobyric acid synthase (503 aa).

A GATase cobBQ-type domain is found at 255–444; it reads AIDVAVIRCP…MHDLFHNDAF (190 aa). The Nucleophile role is filled by C337. H436 is an active-site residue.

Belongs to the CobB/CobQ family. CobQ subfamily.

It participates in cofactor biosynthesis; adenosylcobalamin biosynthesis. Catalyzes amidations at positions B, D, E, and G on adenosylcobyrinic A,C-diamide. NH(2) groups are provided by glutamine, and one molecule of ATP is hydrogenolyzed for each amidation. The protein is Cobyric acid synthase of Geobacillus kaustophilus (strain HTA426).